The following is a 296-amino-acid chain: Protoheme IX farnesyltransferase (296 aa).

The next 9 helical transmembrane spans lie at 11-31, 35-55, 84-104, 107-127, 132-152, 162-182, 208-228, 229-249, and 264-284; these read PGIIFGNLISVIGGFLLAAQG, YPLFLATLVGVSLVVASGCVF, VTLVYASLLGIAGFALLYVAA, LAMWLAVMGFVVYVGVYSLYM, VYGTLIGSLSGAAPPVIGYCA, LILLLIFSLWQMPHSYAIAIF, ITLYIVAFAIATLMLSLGGYA, GYKYLIVAAAVSVWWLGMALS, and LFVFSIVAITSLSVMMSVDSM.

It belongs to the UbiA prenyltransferase family. Protoheme IX farnesyltransferase subfamily.

The protein localises to the cell inner membrane. The catalysed reaction is heme b + (2E,6E)-farnesyl diphosphate + H2O = Fe(II)-heme o + diphosphate. It functions in the pathway porphyrin-containing compound metabolism; heme O biosynthesis; heme O from protoheme: step 1/1. Functionally, converts heme B (protoheme IX) to heme O by substitution of the vinyl group on carbon 2 of heme B porphyrin ring with a hydroxyethyl farnesyl side group. The chain is Protoheme IX farnesyltransferase from Pectobacterium atrosepticum (strain SCRI 1043 / ATCC BAA-672) (Erwinia carotovora subsp. atroseptica).